The chain runs to 1249 residues: Minor capsid protein M1249L (1249 aa).

The protein belongs to the asfivirus M1249L family. Interacts with the minor capsid protein p17 and with the hexon capsid protein p72 capsomers; these interactions form a rigid zipper structure that stabilizes the capsomers. Interacts with host IRF3.

It localises to the virion. Its subcellular location is the host cytoplasm. Functionally, together with the penton and the other minor capsid proteins (p17, p49), forms a complicated network immediately below the outer capsid shell, stabilizing the whole capsid. In addition, blocks IFN-beta transactivation mediated by the cGAS-STING pathway and regulates the transcriptional activity of IFN-beta. Mechanistically, suppresses the phosphorylation of host key adapter protein TBK1 and degrades host IRF3 in the cytoplasm. The protein is Minor capsid protein M1249L of African swine fever virus (isolate Tick/South Africa/Pretoriuskop Pr4/1996) (ASFV).